Consider the following 444-residue polypeptide: Glucoside xylosyltransferase 2 (444 aa).

At 1-4 (MKLR) the chain is on the cytoplasmic side. The helical; Signal-anchor for type II membrane protein transmembrane segment at 5–25 (SKAAALLLLALAVLLLALLSL) threads the bilayer. The Lumenal portion of the chain corresponds to 26–444 (RARRDPEPPG…IIHMGPNPMS (419 aa)). Positions 31-101 (PEPPGFPARP…LARRPGETRS (71 aa)) are disordered. The span at 68–83 (RSPRRQPPRLRPRAGR) shows a compositional bias: basic residues. The span at 87–101 (ASREKLARRPGETRS) shows a compositional bias: basic and acidic residues. Residue Asn-275 is glycosylated (N-linked (GlcNAc...) asparagine).

Belongs to the glycosyltransferase 8 family.

The protein resides in the membrane. It catalyses the reaction 3-O-(beta-D-glucosyl)-L-seryl-[EGF-like domain protein] + UDP-alpha-D-xylose = 3-O-[alpha-D-xylosyl-(1-&gt;3)-beta-D-glucosyl]-L-seryl-[EGF-like domain protein] + UDP + H(+). Functionally, glycosyltransferase which elongates the O-linked glucose attached to EGF-like repeats in the extracellular domain of Notch proteins by catalyzing the addition of xylose. The chain is Glucoside xylosyltransferase 2 (Gxylt2) from Mus musculus (Mouse).